A 346-amino-acid chain; its full sequence is Centromere protein L (346 aa).

At serine 41 the chain carries Phosphoserine. Position 45 is a phosphothreonine (threonine 45). A Phosphoserine modification is found at serine 55.

Belongs to the CENP-L/IML3 family. In terms of assembly, component of the CENPA-CAD complex, composed of CENPI, CENPK, CENPL, CENPO, CENPP, CENPQ, CENPR and CENPS. The CENPA-CAD complex interacts with the CENPA-NAC complex, at least composed of CENPA, CENPC, CENPH, CENPM, CENPN, CENPT and CENPU.

The protein localises to the nucleus. The protein resides in the chromosome. It localises to the centromere. Its function is as follows. Component of the CENPA-CAD (nucleosome distal) complex, a complex recruited to centromeres which is involved in assembly of kinetochore proteins, mitotic progression and chromosome segregation. May be involved in incorporation of newly synthesized CENPA into centromeres via its interaction with the CENPA-NAC complex. The sequence is that of Centromere protein L (CENPL) from Bos taurus (Bovine).